The chain runs to 397 residues: Acetate kinase (397 aa).

Mg(2+) is bound at residue Asn8. Lys15 contributes to the ATP binding site. A substrate-binding site is contributed by Arg89. Asp146 serves as the catalytic Proton donor/acceptor. ATP contacts are provided by residues 206 to 210, 283 to 285, and 331 to 335; these read HVGNG, DMR, and GMGEN. Position 383 (Glu383) interacts with Mg(2+).

The protein belongs to the acetokinase family. In terms of assembly, homodimer. Mg(2+) serves as cofactor. Requires Mn(2+) as cofactor.

The protein resides in the cytoplasm. It carries out the reaction acetate + ATP = acetyl phosphate + ADP. The protein operates within metabolic intermediate biosynthesis; acetyl-CoA biosynthesis; acetyl-CoA from acetate: step 1/2. Functionally, catalyzes the formation of acetyl phosphate from acetate and ATP. Can also catalyze the reverse reaction. This Streptococcus agalactiae serotype Ia (strain ATCC 27591 / A909 / CDC SS700) protein is Acetate kinase.